The sequence spans 142 residues: Peptide methionine sulfoxide reductase MsrB (142 aa).

The MsrB domain occupies 2 to 125 (IKKNKEELND…NSAAIQFIPY (124 aa)). Catalysis depends on C114, which acts as the Nucleophile.

The protein belongs to the MsrB Met sulfoxide reductase family.

The catalysed reaction is L-methionyl-[protein] + [thioredoxin]-disulfide + H2O = L-methionyl-(R)-S-oxide-[protein] + [thioredoxin]-dithiol. This is Peptide methionine sulfoxide reductase MsrB from Staphylococcus epidermidis (strain ATCC 35984 / DSM 28319 / BCRC 17069 / CCUG 31568 / BM 3577 / RP62A).